Here is a 190-residue protein sequence, read N- to C-terminus: MSKYMGGKEASSVLGVHQRTLYQWDKKGWIKTIRTKGGKRLYDVGSYLADKDEESKEDHKLSICYVRVSSNSQKDDLERQIKFMKKKYPNHTIIKDISSGINMNRKGLNKIIDLAIEGRIKEVVVAYKDRLAIFGFSLIERLIETYSDGKIVVVRKKENQEPQEELIEDMMDVMNVFTARRNGSRKYSNK.

Residues 11–30 (SSVLGVHQRTLYQWDKKGWI) constitute a DNA-binding region (H-T-H motif). A Resolvase/invertase-type recombinase catalytic domain is found at 61–190 (LSICYVRVSS…RNGSRKYSNK (130 aa)). Residues 67–92 (RVSSNSQKDDLERQIKFMKKKYPNHT) are a coiled coil. The active-site O-(5'-phospho-DNA)-serine intermediate is the S69.

Belongs to the site-specific recombinase resolvase family.

Functionally, resolvase catalyzes the resolution (a site-specific recombination) of the cointegrated replicon to yield the final transposition products. The protein is Putative resolvase R80 of Acanthamoeba polyphaga mimivirus (APMV).